Here is a 467-residue protein sequence, read N- to C-terminus: Asparagine--tRNA ligase (467 aa).

It belongs to the class-II aminoacyl-tRNA synthetase family. Homodimer.

It localises to the cytoplasm. It carries out the reaction tRNA(Asn) + L-asparagine + ATP = L-asparaginyl-tRNA(Asn) + AMP + diphosphate + H(+). This Protochlamydia amoebophila (strain UWE25) protein is Asparagine--tRNA ligase.